We begin with the raw amino-acid sequence, 241 residues long: 1-(5-phosphoribosyl)-5-[(5-phosphoribosylamino)methylideneamino] imidazole-4-carboxamide isomerase (241 aa).

The active-site Proton acceptor is Asp10. Residue Asp131 is the Proton donor of the active site.

This sequence belongs to the HisA/HisF family.

It localises to the cytoplasm. It carries out the reaction 1-(5-phospho-beta-D-ribosyl)-5-[(5-phospho-beta-D-ribosylamino)methylideneamino]imidazole-4-carboxamide = 5-[(5-phospho-1-deoxy-D-ribulos-1-ylimino)methylamino]-1-(5-phospho-beta-D-ribosyl)imidazole-4-carboxamide. Its pathway is amino-acid biosynthesis; L-histidine biosynthesis; L-histidine from 5-phospho-alpha-D-ribose 1-diphosphate: step 4/9. The protein is 1-(5-phosphoribosyl)-5-[(5-phosphoribosylamino)methylideneamino] imidazole-4-carboxamide isomerase of Bifidobacterium adolescentis (strain ATCC 15703 / DSM 20083 / NCTC 11814 / E194a).